The following is a 319-amino-acid chain: Aliphatic sulfonates import ATP-binding protein SsuB (319 aa).

Positions 63 to 282 (VTLSGVSKRF…ARASAAFAAL (220 aa)) constitute an ABC transporter domain. Residue 95-102 (GRSGCGKS) coordinates ATP.

The protein belongs to the ABC transporter superfamily. Aliphatic sulfonates importer (TC 3.A.1.17.2) family. The complex is composed of two ATP-binding proteins (SsuB), two transmembrane proteins (SsuC) and a solute-binding protein (SsuA).

The protein localises to the cell inner membrane. It carries out the reaction ATP + H2O + aliphatic sulfonate-[sulfonate-binding protein]Side 1 = ADP + phosphate + aliphatic sulfonateSide 2 + [sulfonate-binding protein]Side 1.. Part of the ABC transporter complex SsuABC involved in aliphatic sulfonates import. Responsible for energy coupling to the transport system. The polypeptide is Aliphatic sulfonates import ATP-binding protein SsuB (Burkholderia ambifaria (strain ATCC BAA-244 / DSM 16087 / CCUG 44356 / LMG 19182 / AMMD) (Burkholderia cepacia (strain AMMD))).